Consider the following 890-residue polypeptide: DNA mismatch repair protein MutS (890 aa).

An ATP-binding site is contributed by 645 to 652 (GPNMAGKS).

The protein belongs to the DNA mismatch repair MutS family.

This protein is involved in the repair of mismatches in DNA. It is possible that it carries out the mismatch recognition step. This protein has a weak ATPase activity. This Rickettsia rickettsii (strain Iowa) protein is DNA mismatch repair protein MutS.